The chain runs to 653 residues: DNA mismatch repair protein MutL (653 aa).

Residues 368-413 form a disordered region; the sequence is EVSQVAEPEGKTDITNKKETETKEKAEKKENKQEEKEEKTSAPEYV. A compositionally biased stretch (basic and acidic residues) spans 375-408; that stretch reads PEGKTDITNKKETETKEKAEKKENKQEEKEEKTS.

It belongs to the DNA mismatch repair MutL/HexB family.

This protein is involved in the repair of mismatches in DNA. It is required for dam-dependent methyl-directed DNA mismatch repair. May act as a 'molecular matchmaker', a protein that promotes the formation of a stable complex between two or more DNA-binding proteins in an ATP-dependent manner without itself being part of a final effector complex. This Lactobacillus delbrueckii subsp. bulgaricus (strain ATCC 11842 / DSM 20081 / BCRC 10696 / JCM 1002 / NBRC 13953 / NCIMB 11778 / NCTC 12712 / WDCM 00102 / Lb 14) protein is DNA mismatch repair protein MutL.